Consider the following 341-residue polypeptide: HTH-type transcriptional repressor CytR (341 aa).

The 55-residue stretch at 10–64 (ATMKDVALKAKVSTATVSRALMNPDKVSQATRNRVEKAAREVGYLPQPMGRNVKR) folds into the HTH lacI-type domain. The segment at residues 12–31 (MKDVALKAKVSTATVSRALM) is a DNA-binding region (H-T-H motif).

In terms of biological role, this protein negatively controls the transcription initiation of genes such as deoCABD, udp, and cdd encoding catabolizing enzymes and nupC, nupG, and tsx encoding transporting and pore-forming proteins. Binds cytidine and adenosine as effectors. The polypeptide is HTH-type transcriptional repressor CytR (cytR) (Escherichia coli (strain K12)).